The sequence spans 607 residues: Glutamine--fructose-6-phosphate aminotransferase [isomerizing] (607 aa).

Catalysis depends on Cys-2, which acts as the Nucleophile; for GATase activity. Residues 2-217 form the Glutamine amidotransferase type-2 domain; that stretch reads CGIIGIIGND…DGDWAVLTRN (216 aa). SIS domains follow at residues 283–422 and 455–597; these read IGID…ARGA and VCHD…VDQP. The For Fru-6P isomerization activity role is filled by Lys-602.

As to quaternary structure, homodimer.

It is found in the cytoplasm. The enzyme catalyses D-fructose 6-phosphate + L-glutamine = D-glucosamine 6-phosphate + L-glutamate. Catalyzes the first step in hexosamine metabolism, converting fructose-6P into glucosamine-6P using glutamine as a nitrogen source. The protein is Glutamine--fructose-6-phosphate aminotransferase [isomerizing] of Brucella melitensis biotype 1 (strain ATCC 23456 / CCUG 17765 / NCTC 10094 / 16M).